We begin with the raw amino-acid sequence, 346 residues long: Alkanal monooxygenase alpha chain (346 aa).

As to quaternary structure, heterodimer of an alpha and a beta chain.

The catalysed reaction is a long-chain fatty aldehyde + FMNH2 + O2 = a long-chain fatty acid + hnu + FMN + H2O + 2 H(+). In terms of biological role, light-emitting reaction in luminous bacteria. The sequence is that of Alkanal monooxygenase alpha chain (luxA) from Photobacterium phosphoreum.